The primary structure comprises 396 residues: Phosphopentomutase (396 aa).

Positions 13, 288, 293, 329, 330, and 341 each coordinate Mn(2+).

This sequence belongs to the phosphopentomutase family. Requires Mn(2+) as cofactor.

It is found in the cytoplasm. It carries out the reaction 2-deoxy-alpha-D-ribose 1-phosphate = 2-deoxy-D-ribose 5-phosphate. It catalyses the reaction alpha-D-ribose 1-phosphate = D-ribose 5-phosphate. The protein operates within carbohydrate degradation; 2-deoxy-D-ribose 1-phosphate degradation; D-glyceraldehyde 3-phosphate and acetaldehyde from 2-deoxy-alpha-D-ribose 1-phosphate: step 1/2. Functionally, isomerase that catalyzes the conversion of deoxy-ribose 1-phosphate (dRib-1-P) and ribose 1-phosphate (Rib-1-P) to deoxy-ribose 5-phosphate (dRib-5-P) and ribose 5-phosphate (Rib-5-P), respectively. In Clostridium perfringens (strain SM101 / Type A), this protein is Phosphopentomutase.